The following is a 504-amino-acid chain: Anaerobic nitric oxide reductase transcription regulator NorR (504 aa).

A 4-aspartylphosphate modification is found at Asp57. Positions 187-416 (MIGLSPGMTQ…LEHAIHRAVV (230 aa)) constitute a Sigma-54 factor interaction domain. Residues 215–222 (GETGTGKE) and 278–287 (ADNGTLFLDE) each bind ATP. The H-T-H motif DNA-binding region spans 479–498 (WAACARMLETDVANLHRLAK).

The protein operates within nitrogen metabolism; nitric oxide reduction. Required for the expression of anaerobic nitric oxide (NO) reductase, acts as a transcriptional activator for at least the norVW operon. Activation also requires sigma-54. The polypeptide is Anaerobic nitric oxide reductase transcription regulator NorR (Escherichia coli (strain ATCC 8739 / DSM 1576 / NBRC 3972 / NCIMB 8545 / WDCM 00012 / Crooks)).